The following is a 324-amino-acid chain: Beta-ketoacyl-[acyl-carrier-protein] synthase III (324 aa).

Active-site residues include cysteine 113 and histidine 251. The ACP-binding stretch occupies residues 252-256 (QANKR). The active site involves asparagine 281.

Belongs to the thiolase-like superfamily. FabH family. As to quaternary structure, homodimer.

Its subcellular location is the cytoplasm. It catalyses the reaction malonyl-[ACP] + acetyl-CoA + H(+) = 3-oxobutanoyl-[ACP] + CO2 + CoA. It participates in lipid metabolism; fatty acid biosynthesis. Catalyzes the condensation reaction of fatty acid synthesis by the addition to an acyl acceptor of two carbons from malonyl-ACP. Catalyzes the first condensation reaction which initiates fatty acid synthesis and may therefore play a role in governing the total rate of fatty acid production. Possesses both acetoacetyl-ACP synthase and acetyl transacylase activities. Its substrate specificity determines the biosynthesis of branched-chain and/or straight-chain of fatty acids. This chain is Beta-ketoacyl-[acyl-carrier-protein] synthase III, found in Bartonella henselae (strain ATCC 49882 / DSM 28221 / CCUG 30454 / Houston 1) (Rochalimaea henselae).